The following is a 268-amino-acid chain: L-aspartate dehydrogenase (268 aa).

Alanine 125 and asparagine 191 together coordinate NAD(+). Histidine 221 is a catalytic residue.

Belongs to the L-aspartate dehydrogenase family.

It catalyses the reaction L-aspartate + NADP(+) + H2O = oxaloacetate + NH4(+) + NADPH + H(+). The catalysed reaction is L-aspartate + NAD(+) + H2O = oxaloacetate + NH4(+) + NADH + H(+). It participates in cofactor biosynthesis; NAD(+) biosynthesis; iminoaspartate from L-aspartate (dehydrogenase route): step 1/1. Its function is as follows. Specifically catalyzes the NAD or NADP-dependent dehydrogenation of L-aspartate to iminoaspartate. This chain is L-aspartate dehydrogenase, found in Brucella anthropi (strain ATCC 49188 / DSM 6882 / CCUG 24695 / JCM 21032 / LMG 3331 / NBRC 15819 / NCTC 12168 / Alc 37) (Ochrobactrum anthropi).